We begin with the raw amino-acid sequence, 146 residues long: Phage-like element PBSX protein XkdJ (146 aa).

To B.subtilis YqbJ.

The protein is Phage-like element PBSX protein XkdJ (xkdJ) of Bacillus subtilis (strain 168).